Here is a 221-residue protein sequence, read N- to C-terminus: Elongation factor Ts (221 aa).

The interval 82 to 85 (TDFV) is involved in Mg(2+) ion dislocation from EF-Tu.

This sequence belongs to the EF-Ts family.

It localises to the cytoplasm. Associates with the EF-Tu.GDP complex and induces the exchange of GDP to GTP. It remains bound to the aminoacyl-tRNA.EF-Tu.GTP complex up to the GTP hydrolysis stage on the ribosome. The chain is Elongation factor Ts from Synechococcus elongatus (strain ATCC 33912 / PCC 7942 / FACHB-805) (Anacystis nidulans R2).